The chain runs to 118 residues: Histone H4 (118 aa).

A disordered region spans residues 1–39; that stretch reads MATDTGSGRGKGGKGVTLGKGSKGAKASKGGKRIRTKTQ. Residues 7-22 show a composition bias toward gly residues; the sequence is SGRGKGGKGVTLGKGS.

Belongs to the histone H4 family. In terms of assembly, the nucleosome is a histone octamer containing two molecules each of H2A, H2B, H3 and H4 assembled in one H3-H4 heterotetramer and two H2A-H2B heterodimers. The octamer wraps approximately 147 bp of DNA.

The protein resides in the nucleus. The protein localises to the chromosome. Its function is as follows. Core component of nucleosome. Nucleosomes wrap and compact DNA into chromatin, limiting DNA accessibility to the cellular machineries which require DNA as a template. Histones thereby play a central role in transcription regulation, DNA repair, DNA replication and chromosomal stability. DNA accessibility is regulated via a complex set of post-translational modifications of histones, also called histone code, and nucleosome remodeling. In Entamoeba histolytica (strain ATCC 30459 / HM-1:IMSS / ABRM), this protein is Histone H4.